The primary structure comprises 606 residues: CDPK-related kinase 8 (606 aa).

Over residues 1–14 the composition is skewed to polar residues; sequence MGGCTSKPSTSSGR. The tract at residues 1 to 132 is disordered; sequence MGGCTSKPST…TEVPQREEEE (132 aa). Gly2 carries N-myristoyl glycine lipidation. Over residues 98-110 the composition is skewed to basic residues; it reads KHIRAALRRRKGK. In terms of domain architecture, Protein kinase spans 150–412; it reads VELGEEIGRG…ASQALMHPWI (263 aa). ATP is bound by residues 156 to 164 and Lys182; that span reads IGRGHFGYT. Asp278 serves as the catalytic Proton acceptor. Ser318 carries the post-translational modification Phosphoserine. Residues 418–448 are autoinhibitory domain; it reads DMNIPFDILIFRQMKAYLRSSSLRKAALRAL. The segment at 437–457 is calmodulin binding (CaMBD); that stretch reads SSSLRKAALRALSKTLIKDEI. EF-hand domains lie at 455–491, 492–527, 528–567, and 570–599; these read DEIL…ATEA, MKES…VHQH, ESLD…GPSI, and HSVL…VSVR. Residues Asn470, Asp472, Glu516, Asp545, Asn547, Asn549, Glu556, Asp581, and Lys583 each coordinate Ca(2+). A Phosphoserine modification is found at Ser585.

It belongs to the protein kinase superfamily. Ser/Thr protein kinase family. CDPK subfamily. In terms of assembly, binds calmodulin (CaM) in a calcium-dependent manner. Post-translationally, autophosphorylated.

It localises to the membrane. It carries out the reaction L-seryl-[protein] + ATP = O-phospho-L-seryl-[protein] + ADP + H(+). It catalyses the reaction L-threonyl-[protein] + ATP = O-phospho-L-threonyl-[protein] + ADP + H(+). Activated by calcium and calmodulin. Autophosphorylation may play an important role in the regulation of the kinase activity. Functionally, may play a role in signal transduction pathways that involve calcium as a second messenger. The sequence is that of CDPK-related kinase 8 (CRK8) from Arabidopsis thaliana (Mouse-ear cress).